Consider the following 324-residue polypeptide: Antihemorrhagic factor cHLP-A (324 aa).

The N-terminal stretch at 1–19 (MNSLVALVLLGQIIGSTLS) is a signal peptide. Cystatin fetuin-A-type domains follow at residues 21-130 (QLGP…VKCK) and 141-254 (RNCP…SDCV). Intrachain disulfides connect Cys28-Cys315, Cys85-Cys96, Cys110-Cys129, Cys143-Cys146, Cys205-Cys217, and Cys230-Cys253. Asn204 is a glycosylation site (N-linked (GlcNAc...) asparagine). The N-linked (GlcNAc...) asparagine glycan is linked to Asn282.

The protein belongs to the fetuin family. In terms of assembly, homodimer. Expressed by the liver.

The protein localises to the secreted. In terms of biological role, potent inhibitor of hemorrhagic activity but also proteolytic activities. Inhibition occurs by formation of a non-covalent complex between this protein and the proteinases at their metalloproteinase domains. This chain is Antihemorrhagic factor cHLP-A, found in Gloydius brevicauda (Korean slamosa snake).